We begin with the raw amino-acid sequence, 284 residues long: Formyltetrahydrofolate deformylase (284 aa).

The 84-residue stretch at 7 to 90 (TLLVSCPDQP…QIHFSDQLPR (84 aa)) folds into the ACT domain. Asp228 is a catalytic residue.

Belongs to the PurU family.

It carries out the reaction (6R)-10-formyltetrahydrofolate + H2O = (6S)-5,6,7,8-tetrahydrofolate + formate + H(+). It participates in purine metabolism; IMP biosynthesis via de novo pathway; formate from 10-formyl-5,6,7,8-tetrahydrofolate: step 1/1. Functionally, catalyzes the hydrolysis of 10-formyltetrahydrofolate (formyl-FH4) to formate and tetrahydrofolate (FH4). The chain is Formyltetrahydrofolate deformylase from Synechocystis sp. (strain ATCC 27184 / PCC 6803 / Kazusa).